The primary structure comprises 191 residues: Ribonuclease HII (191 aa).

Residues 7–191 (ILMAGVDEVG…YSPVADLISK (185 aa)) enclose the RNase H type-2 domain. A divalent metal cation is bound by residues aspartate 13, glutamate 14, and aspartate 103.

The protein belongs to the RNase HII family. It depends on Mn(2+) as a cofactor. Mg(2+) serves as cofactor.

Its subcellular location is the cytoplasm. It carries out the reaction Endonucleolytic cleavage to 5'-phosphomonoester.. Its function is as follows. Endonuclease that specifically degrades the RNA of RNA-DNA hybrids. The protein is Ribonuclease HII of Legionella pneumophila (strain Corby).